A 208-amino-acid chain; its full sequence is Proheparin-binding EGF-like growth factor (208 aa).

An N-terminal signal peptide occupies residues 1 to 23 (MKLLPSVVLKLFLAAVFSALVTG). A propeptide spanning residues 24–62 (ESLERLRRGLADGTSNLVSPTESTDQLLPPGGGRGREVL) is cleaved from the precursor. The Extracellular segment spans residues 24–161 (ESLERLRRGL…NRLYTYDHTT (138 aa)). The span at 37-49 (TSNLVSPTESTDQ) shows a compositional bias: polar residues. 2 disordered regions span residues 37 to 57 (TSNL…GGGR) and 81 to 104 (QALA…LGKK). Residue threonine 85 is glycosylated (O-linked (GalNAc...) threonine). Over residues 93-102 (KRKKKGKGLG) the composition is skewed to basic residues. The EGF-like domain occupies 104–144 (KRDPCLRKYKDFCIHGECKYVKELRAPSCICHPGYHGERCH). 3 disulfides stabilise this stretch: cysteine 108–cysteine 121, cysteine 116–cysteine 132, and cysteine 134–cysteine 143. Residues 149–208 (PVKNRLYTYDHTTILAVVAVVLSSVCLLVIVGLLMFRYHRRGGYDVENEEKVKLGVTASH) constitute a propeptide, C-terminal. Residues 162 to 182 (ILAVVAVVLSSVCLLVIVGLL) form a helical membrane-spanning segment. Residues 183–208 (MFRYHRRGGYDVENEEKVKLGVTASH) are Cytoplasmic-facing.

Interacts with FBLN1. Interacts with EGFR and ERBB4. In terms of processing, O-glycosylated. As to expression, macrophages, midbrain, cerebellum, hypothalamus, cerebral cortex, bulbourethral gland, lung, heart ventricle, kidney, skin, prostate, seminal vesicle, testis; at low levels in lymph node, thymus, spleen; not detected in pituitary, olfactory bulb, thyroid, duodenum, pancreas, liver, submaxillary gland.

Its subcellular location is the secreted. The protein localises to the extracellular space. It localises to the cell membrane. Functionally, growth factor that mediates its effects via EGFR, ERBB2 and ERBB4. Required for normal cardiac valve formation and normal heart function. Promotes smooth muscle cell proliferation. May be involved in macrophage-mediated cellular proliferation. It is mitogenic for fibroblasts, but not endothelial cells. It is able to bind EGF receptor/EGFR with higher affinity than EGF itself and is a far more potent mitogen for smooth muscle cells than EGF. Also acts as a diphtheria toxin receptor. The polypeptide is Proheparin-binding EGF-like growth factor (HBEGF) (Sus scrofa (Pig)).